The following is a 423-amino-acid chain: Putative galacturan 1,4-alpha-galacturonidase C (423 aa).

A signal peptide spans 1–20; it reads MRFSIISLVSLPLFLGLTYA. Residues N100, N120, N150, N173, and N185 are each glycosylated (N-linked (GlcNAc...) asparagine). D229 acts as the Proton donor in catalysis. The cysteines at positions 231 and 248 are disulfide-linked. N245 carries an N-linked (GlcNAc...) asparagine glycan. Residue N252 is part of the active site. 2 N-linked (GlcNAc...) asparagine glycosylation sites follow: N344 and N362. The cysteines at positions 379 and 385 are disulfide-linked. N-linked (GlcNAc...) asparagine glycosylation is present at N400. A disulfide bridge links C409 with C423.

It belongs to the glycosyl hydrolase 28 family.

It localises to the secreted. The catalysed reaction is [(1-&gt;4)-alpha-D-galacturonosyl](n) + H2O = alpha-D-galacturonate + [(1-&gt;4)-alpha-D-galacturonosyl](n-1). Functionally, specific in hydrolyzing the terminal glycosidic bond of polygalacturonic acid and oligogalacturonates. The protein is Putative galacturan 1,4-alpha-galacturonidase C (rgxC) of Neosartorya fischeri (strain ATCC 1020 / DSM 3700 / CBS 544.65 / FGSC A1164 / JCM 1740 / NRRL 181 / WB 181) (Aspergillus fischerianus).